Reading from the N-terminus, the 66-residue chain is MFTLKKSMLLLFFLGTINLSLCQEERDAEEERRDEDNAKMEEIKRGIFSTVFKAGKGIVCGLTGLC.

The N-terminal stretch at 1–22 is a signal peptide; sequence MFTLKKSMLLLFFLGTINLSLC. A propeptide spans 23-43 (removed in mature form); that stretch reads QEERDAEEERRDEDNAKMEEI. C60 and C66 form a disulfide bridge.

Expressed by the skin glands.

The protein localises to the secreted. Has antimicrobial activity against Gram-negative bacterium E.coli ATCC 8739 (MIC=25 ug), against Gram positive bacteria S.aureus ATCC 6538 (MIC=3.1 ug), methicillin-resistant S.aureus ATCC 43300 (MIC=12.5 ug), B.subtilis ATCC 6633 (MIC=12.5 ug) and against fungus C.albicans ATCC 90028 (MIC=50 ug). This is Nigrocin-2ISa from Odorrana ishikawae (Ishikawa's frog).